Reading from the N-terminus, the 173-residue chain is Archaemetzincin (173 aa).

H130 serves as a coordination point for Zn(2+). E131 serves as the catalytic Proton acceptor. Positions 134, 140, 141, 146, 165, and 168 each coordinate Zn(2+).

The protein belongs to the peptidase M54 family. Monomer. It depends on Zn(2+) as a cofactor.

Probable zinc metalloprotease whose natural substrate is unknown. This is Archaemetzincin from Natronomonas pharaonis (strain ATCC 35678 / DSM 2160 / CIP 103997 / JCM 8858 / NBRC 14720 / NCIMB 2260 / Gabara) (Halobacterium pharaonis).